The sequence spans 262 residues: Outer membrane protein assembly factor BamD (262 aa).

An N-terminal signal peptide occupies residues 1–18; sequence MRKIKSLALLAVAALVIG. Cys19 carries the N-palmitoyl cysteine lipid modification. The S-diacylglycerol cysteine moiety is linked to residue Cys19.

It belongs to the BamD family. In terms of assembly, part of the Bam complex.

Its subcellular location is the cell outer membrane. In terms of biological role, part of the outer membrane protein assembly complex, which is involved in assembly and insertion of beta-barrel proteins into the outer membrane. This Haemophilus influenzae (strain ATCC 51907 / DSM 11121 / KW20 / Rd) protein is Outer membrane protein assembly factor BamD.